The primary structure comprises 156 residues: Proline dehydrogenase transcriptional activator (156 aa).

Residues 10 to 71 (LDHFDLKILE…VLNPQKLGVD (62 aa)) form the HTH asnC-type domain. Positions 29-48 (VLQLSKRVGLSKTPCQTRLK) form a DNA-binding region, H-T-H motif.

Its function is as follows. Transcriptional activator of the putA gene in response to proline. This is Proline dehydrogenase transcriptional activator (putR) from Rhizobium radiobacter (Agrobacterium tumefaciens).